The chain runs to 388 residues: Chorismate synthase (388 aa).

NADP(+) contacts are provided by R39 and R45. FMN-binding positions include 130 to 132 (RSS), 251 to 252 (NA), G296, 311 to 315 (KPIPT), and R337.

This sequence belongs to the chorismate synthase family. In terms of assembly, homotetramer. FMNH2 serves as cofactor.

The catalysed reaction is 5-O-(1-carboxyvinyl)-3-phosphoshikimate = chorismate + phosphate. It participates in metabolic intermediate biosynthesis; chorismate biosynthesis; chorismate from D-erythrose 4-phosphate and phosphoenolpyruvate: step 7/7. In terms of biological role, catalyzes the anti-1,4-elimination of the C-3 phosphate and the C-6 proR hydrogen from 5-enolpyruvylshikimate-3-phosphate (EPSP) to yield chorismate, which is the branch point compound that serves as the starting substrate for the three terminal pathways of aromatic amino acid biosynthesis. This reaction introduces a second double bond into the aromatic ring system. This chain is Chorismate synthase, found in Streptococcus pyogenes serotype M3 (strain SSI-1).